The primary structure comprises 69 residues: ATP synthase protein 8 (69 aa).

A helical transmembrane segment spans residues 8–24 (TWTLTISLMIISLFCIY). Residue lysine 55 is modified to N6-acetyllysine; alternate. Lysine 55 is subject to N6-succinyllysine; alternate. N6-acetyllysine is present on lysine 58.

The protein belongs to the ATPase protein 8 family. F-type ATPases have 2 components, CF(1) - the catalytic core - and CF(0) - the membrane proton channel. Component of an ATP synthase complex composed of ATP5PB, ATP5MC1, ATP5F1E, ATP5PD, ATP5ME, ATP5PF, ATP5MF, MT-ATP6, MT-ATP8, ATP5F1A, ATP5F1B, ATP5F1D, ATP5F1C, ATP5PO, ATP5MG, ATP5MK and ATP5MJ. Interacts with PRICKLE3.

Its subcellular location is the mitochondrion membrane. Its function is as follows. Mitochondrial membrane ATP synthase (F(1)F(0) ATP synthase or Complex V) produces ATP from ADP in the presence of a proton gradient across the membrane which is generated by electron transport complexes of the respiratory chain. F-type ATPases consist of two structural domains, F(1) - containing the extramembraneous catalytic core and F(0) - containing the membrane proton channel, linked together by a central stalk and a peripheral stalk. During catalysis, ATP synthesis in the catalytic domain of F(1) is coupled via a rotary mechanism of the central stalk subunits to proton translocation. Part of the complex F(0) domain. Minor subunit located with subunit a in the membrane. The protein is ATP synthase protein 8 (MT-ATP8) of Didelphis virginiana (North American opossum).